We begin with the raw amino-acid sequence, 336 residues long: Holliday junction branch migration complex subunit RuvB (336 aa).

A large ATPase domain (RuvB-L) region spans residues 1-185 (MSIIVERLLS…FGVLSRVEYY (185 aa)). Residues L24, R25, G66, K69, T70, T71, 132–134 (EDF), R175, Y185, and R222 contribute to the ATP site. T70 serves as a coordination point for Mg(2+). The small ATPAse domain (RuvB-S) stretch occupies residues 186-256 (TVDQLSAIVE…ITQMALELLQ (71 aa)). Positions 259 to 336 (KLGLDHIDHK…EHFGMEIPKV (78 aa)) are head domain (RuvB-H). Positions 314 and 319 each coordinate DNA.

Belongs to the RuvB family. In terms of assembly, homohexamer. Forms an RuvA(8)-RuvB(12)-Holliday junction (HJ) complex. HJ DNA is sandwiched between 2 RuvA tetramers; dsDNA enters through RuvA and exits via RuvB. An RuvB hexamer assembles on each DNA strand where it exits the tetramer. Each RuvB hexamer is contacted by two RuvA subunits (via domain III) on 2 adjacent RuvB subunits; this complex drives branch migration. In the full resolvosome a probable DNA-RuvA(4)-RuvB(12)-RuvC(2) complex forms which resolves the HJ.

It localises to the cytoplasm. It carries out the reaction ATP + H2O = ADP + phosphate + H(+). In terms of biological role, the RuvA-RuvB-RuvC complex processes Holliday junction (HJ) DNA during genetic recombination and DNA repair, while the RuvA-RuvB complex plays an important role in the rescue of blocked DNA replication forks via replication fork reversal (RFR). RuvA specifically binds to HJ cruciform DNA, conferring on it an open structure. The RuvB hexamer acts as an ATP-dependent pump, pulling dsDNA into and through the RuvAB complex. RuvB forms 2 homohexamers on either side of HJ DNA bound by 1 or 2 RuvA tetramers; 4 subunits per hexamer contact DNA at a time. Coordinated motions by a converter formed by DNA-disengaged RuvB subunits stimulates ATP hydrolysis and nucleotide exchange. Immobilization of the converter enables RuvB to convert the ATP-contained energy into a lever motion, pulling 2 nucleotides of DNA out of the RuvA tetramer per ATP hydrolyzed, thus driving DNA branch migration. The RuvB motors rotate together with the DNA substrate, which together with the progressing nucleotide cycle form the mechanistic basis for DNA recombination by continuous HJ branch migration. Branch migration allows RuvC to scan DNA until it finds its consensus sequence, where it cleaves and resolves cruciform DNA. This chain is Holliday junction branch migration complex subunit RuvB, found in Bacillus cereus (strain ATCC 14579 / DSM 31 / CCUG 7414 / JCM 2152 / NBRC 15305 / NCIMB 9373 / NCTC 2599 / NRRL B-3711).